Reading from the N-terminus, the 628-residue chain is DNA mismatch repair protein MutL (628 aa).

Residues Ser334–Ala367 are disordered. The segment covering Gly357 to Ala367 has biased composition (basic and acidic residues).

Belongs to the DNA mismatch repair MutL/HexB family.

This protein is involved in the repair of mismatches in DNA. It is required for dam-dependent methyl-directed DNA mismatch repair. May act as a 'molecular matchmaker', a protein that promotes the formation of a stable complex between two or more DNA-binding proteins in an ATP-dependent manner without itself being part of a final effector complex. This chain is DNA mismatch repair protein MutL, found in Opitutus terrae (strain DSM 11246 / JCM 15787 / PB90-1).